A 94-amino-acid chain; its full sequence is CRISPR-associated endoribonuclease Cas2 (94 aa).

Asp11 contacts Mg(2+).

It belongs to the CRISPR-associated endoribonuclease Cas2 protein family. In terms of assembly, homodimer, forms a heterotetramer with a Cas1 homodimer. Mg(2+) is required as a cofactor.

Its function is as follows. CRISPR (clustered regularly interspaced short palindromic repeat), is an adaptive immune system that provides protection against mobile genetic elements (viruses, transposable elements and conjugative plasmids). CRISPR clusters contain sequences complementary to antecedent mobile elements and target invading nucleic acids. CRISPR clusters are transcribed and processed into CRISPR RNA (crRNA). Functions as a ssRNA-specific endoribonuclease. Involved in the integration of spacer DNA into the CRISPR cassette. The chain is CRISPR-associated endoribonuclease Cas2 from Allochromatium vinosum (strain ATCC 17899 / DSM 180 / NBRC 103801 / NCIMB 10441 / D) (Chromatium vinosum).